The sequence spans 192 residues: Leucine-rich repeat-containing protein 51 (192 aa).

LRR repeat units follow at residues 49–71 (SLTQ…NQVA), 80–101 (NLAW…LTTF), and 103–124 (NLSV…NKLA). The LRRCT domain maps to 137–175 (NPMEEEKGYRQYVLCTLPHITTFDFSGVTKADRTTAEVW).

It localises to the cytoplasm. The sequence is that of Leucine-rich repeat-containing protein 51 from Macaca mulatta (Rhesus macaque).